Reading from the N-terminus, the 217-residue chain is Ribonuclease HII (217 aa).

In terms of domain architecture, RNase H type-2 spans 27-216 (SRVAGVDEAG…VKESIQEGVC (190 aa)). D33, E34, and D126 together coordinate a divalent metal cation.

This sequence belongs to the RNase HII family. It depends on Mn(2+) as a cofactor. Mg(2+) is required as a cofactor.

Its subcellular location is the cytoplasm. The catalysed reaction is Endonucleolytic cleavage to 5'-phosphomonoester.. Functionally, endonuclease that specifically degrades the RNA of RNA-DNA hybrids. In Chlamydia trachomatis serovar A (strain ATCC VR-571B / DSM 19440 / HAR-13), this protein is Ribonuclease HII.